We begin with the raw amino-acid sequence, 159 residues long: Afifavidin (159 aa).

Residues 1 to 23 (MRRLASLAVALPLLAVVASPALA) form the signal peptide. One can recognise an Avidin-like domain in the interval 36–151 (GVPAVSSSWV…GSDTFTLVNK (116 aa)). Residues Asn46, Ser50, Tyr66, Asn68, and Gly74 each coordinate biotin. A disulfide bridge connects residues Cys75 and Cys104. Residues Ser106, Thr108, and Asp144 each coordinate biotin.

Belongs to the avidin/streptavidin family. In terms of assembly, exhibits a dynamic oligomeric assembly: the apo form self-assembles mostly into toroid-shaped homooctamers, with a small fraction of homodimers, yet upon biotin binding the intact afifavidin consists solely of the dimer.

It is found in the secreted. Its function is as follows. The exact role played by afifavidin is still obscure. Forms a strong non-covalent complex with biotin and 2-iminobiotin. The protein is Afifavidin of Afifella pfennigii (Rhodobium pfennigii).